Consider the following 316-residue polypeptide: CD276 antigen (316 aa).

Positions 1-28 (MLRGWGGPSVGVSMGTALGVLCLCLTGA) are cleaved as a signal peptide. Residues 29-139 (VEVQVSEDPV…DSAAVSLQVA (111 aa)) enclose the Ig-like V-type domain. The Extracellular segment spans residues 29–248 (VEVQVSEDPV…GQPMTFPPEA (220 aa)). 3 N-linked (GlcNAc...) asparagine glycosylation sites follow: Asn104, Asn189, and Asn215. One can recognise an Ig-like C2-type domain in the interval 145 to 238 (PSMTLEPNKD…QDAHGSVTIT (94 aa)). Cys165 and Cys220 are disulfide-bonded. Residues 249–269 (LWVTVGLSVCLVILLVALAFV) form a helical membrane-spanning segment. The Cytoplasmic portion of the chain corresponds to 270-316 (CWRKIKQSCEEENAGAEDQDGDGEGSKTALRPLKHSENKEDDGQEIA). Residues 281–292 (ENAGAEDQDGDG) are compositionally biased toward acidic residues. The tract at residues 281-316 (ENAGAEDQDGDGEGSKTALRPLKHSENKEDDGQEIA) is disordered.

Belongs to the immunoglobulin superfamily. BTN/MOG family. In terms of assembly, interacts with TREML2 and this interaction enhances T-cell activation.

It localises to the membrane. In terms of biological role, modulates T-cell-mediated immune responses and the development of acute and chronic transplant rejection. May play a positive regulatory role in bone formation and has a dual role in the bone-immune interface. Induces antitumor immunity as it activates both acquired and innate immunity leading to natural killer cell and CD8 T-cell dependent killing of tumor cells. This is CD276 antigen (Cd276) from Rattus norvegicus (Rat).